We begin with the raw amino-acid sequence, 137 residues long: Probable 4-amino-4-deoxy-L-arabinose-phosphoundecaprenol flippase subunit ArnF (137 aa).

Residues 1-3 (MNA) lie on the Cytoplasmic side of the membrane. A helical transmembrane segment spans residues 4 to 24 (LRGWLAALGSMLLASAAQLGM). At 25 to 44 (RWGMSRLPLPEAWAGQTPER) the chain is on the periplasmic side. A helical membrane pass occupies residues 45-65 (AALLAVALAVAAYAASLLCWL). The Cytoplasmic segment spans residues 66–76 (AALRHLPLGRA). Residues 77–97 (YSLLSASYALVYLLAASLPAF) traverse the membrane as a helical segment. Residues 98-100 (DET) are Periplasmic-facing. The helical transmembrane segment at 101–121 (FSTSKILGVGLVVLGVLTVNA) threads the bilayer. The Cytoplasmic segment spans residues 122-137 (RRTAAAPAHHPSRKAP).

Belongs to the ArnF family. In terms of assembly, heterodimer of ArnE and ArnF.

Its subcellular location is the cell inner membrane. It participates in bacterial outer membrane biogenesis; lipopolysaccharide biosynthesis. Functionally, translocates 4-amino-4-deoxy-L-arabinose-phosphoundecaprenol (alpha-L-Ara4N-phosphoundecaprenol) from the cytoplasmic to the periplasmic side of the inner membrane. This is Probable 4-amino-4-deoxy-L-arabinose-phosphoundecaprenol flippase subunit ArnF from Pseudomonas aeruginosa (strain LESB58).